The chain runs to 842 residues: Protein P (842 aa).

Residues 1 to 177 (MPLSYQHFRR…FCGSPYTWEQ (177 aa)) are terminal protein domain (TP). Positions 178–345 (DLQHGAFLDG…YCLSHLVNLL (168 aa)) are spacer. The segment at 184–238 (FLDGPSRVGKEPFHQQSSRIPSRSPVGPSIQSKYQQSRLGLQSQKGPLARGQQGR) is disordered. A compositionally biased stretch (polar residues) spans 212–228 (SIQSKYQQSRLGLQSQK). A polymerase/reverse transcriptase domain (RT) region spans residues 346–689 (QDWGPCTEHG…YMNLYPVARQ (344 aa)). The Reverse transcriptase domain occupies 356 to 599 (EYHIRIPRTP…YSLNFMGYVI (244 aa)). 3 residues coordinate Mg(2+): Asp-428, Asp-550, and Asp-551.

The protein belongs to the hepadnaviridae P protein family.

The enzyme catalyses DNA(n) + a 2'-deoxyribonucleoside 5'-triphosphate = DNA(n+1) + diphosphate. It carries out the reaction Endonucleolytic cleavage to 5'-phosphomonoester.. Its activity is regulated as follows. Activated by host HSP70 and HSP40 in vitro to be able to bind the epsilon loop of the pgRNA. Because deletion of the RNase H region renders the protein partly chaperone-independent, the chaperones may be needed indirectly to relieve occlusion of the RNA-binding site by this domain. Inhibited by several reverse-transcriptase inhibitors: Lamivudine, Adefovir and Entecavir. In terms of biological role, multifunctional enzyme that converts the viral RNA genome into dsDNA in viral cytoplasmic capsids. This enzyme displays a DNA polymerase activity that can copy either DNA or RNA templates, and a ribonuclease H (RNase H) activity that cleaves the RNA strand of RNA-DNA heteroduplexes in a partially processive 3'- to 5'-endonucleasic mode. Neo-synthesized pregenomic RNA (pgRNA) are encapsidated together with the P protein, and reverse-transcribed inside the nucleocapsid. Initiation of reverse-transcription occurs first by binding the epsilon loop on the pgRNA genome, and is initiated by protein priming, thereby the 5'-end of (-)DNA is covalently linked to P protein. Partial (+)DNA is synthesized from the (-)DNA template and generates the relaxed circular DNA (RC-DNA) genome. After budding and infection, the RC-DNA migrates in the nucleus, and is converted into a plasmid-like covalently closed circular DNA (cccDNA). The activity of P protein does not seem to be necessary for cccDNA generation, and is presumably released from (+)DNA by host nuclear DNA repair machinery. The protein is Protein P of Hepatitis B virus genotype G (isolate United States/USG17/2002) (HBV-G).